The sequence spans 170 residues: Cathelicidin antimicrobial peptide (170 aa).

The N-terminal stretch at 1–30 (MKTQRDSPSLGRWSLVLLLLGLVMPLAIVA) is a signal peptide. Positions 31 to 131 (QVLSYQEAVL…DISCDKDNRR (101 aa)) are cleaved as a propeptide — cathelin-like domain (CLD). 2 cysteine pairs are disulfide-bonded: Cys-86/Cys-97 and Cys-108/Cys-125. The active core stretch occupies residues 150–162 (FKRIVQRIKDFLQ).

The protein belongs to the cathelicidin family. Monomer, homodimer or homotrimer (in vitro). Oligomerizes as tetra- or hexamer in solution (in vitro). In terms of processing, proteolytically cleaved by proteinase PRTN3 into antibacterial peptide LL-37. Proteolytically cleaved by cathepsin CTSG and neutrophil elastase ELANE. Resistant to proteolytic degradation in solution, and when bound to both zwitterionic (mimicking mammalian membranes) and negatively charged membranes (mimicking bacterial membranes). Post-translationally, after secretion onto the skin surface, the CAMP gene product is processed by a serine protease-dependent mechanism into multiple novel antimicrobial peptides distinct from and shorter than cathelicidin LL-37. These peptides show enhanced antimicrobial action, acquiring the ability to kill skin pathogens such as S.aureus, E.coli and C.albicans. These peptides have lost the ability to stimulate CXCL8/IL8 release from keratinocytes. The peptides act synergistically, killing bacteria at lower concentrations when present together, and maintain activity at increased salt condition.

The protein resides in the secreted. Its subcellular location is the vesicle. Functionally, antimicrobial protein that is an integral component of the innate immune system. Binds to bacterial lipopolysaccharides (LPS). Acts via neutrophil N-formyl peptide receptors to enhance the release of CXCL2. Postsecretory processing generates multiple cathelicidin antimicrobial peptides with various lengths which act as a topical antimicrobial defense in sweat on skin. The unprocessed precursor form, cathelicidin antimicrobial peptide, inhibits the growth of Gram-negative E.coli and E.aerogenes with efficiencies comparable to that of the mature peptide LL-37 (in vitro). Its function is as follows. Antimicrobial peptide that is an integral component of the innate immune system. Binds to bacterial lipopolysaccharides (LPS). Causes membrane permeabilization by forming transmembrane pores (in vitro). Causes lysis of E.coli. Exhibits antimicrobial activity against Gram-negative bacteria such as P.aeruginosa, S.typhimurium, E.aerogenes, E.coli and P.syringae, Gram-positive bacteria such as L.monocytogenes, S.epidermidis, S.pyogenes and S.aureus, as well as vancomycin-resistant enterococci (in vitro). Exhibits antimicrobial activity against methicillin-resistant S.aureus, P.mirabilis, and C.albicans in low-salt media, but not in media containing 100 mM NaCl (in vitro). Forms chiral supramolecular assemblies with quinolone signal (PQS) molecules of P.aeruginosa, which may lead to interference of bacterial quorum signaling and perturbance of bacterial biofilm formation. May form supramolecular fiber-like assemblies on bacterial membranes. Induces cytokine and chemokine producation as well as TNF/TNFA and CSF2/GMCSF production in normal human keratinocytes. Exhibits hemolytic activity against red blood cells. In terms of biological role, exhibits antimicrobial activity against E.coli and B.megaterium (in vitro). This Nomascus concolor (Black crested gibbon) protein is Cathelicidin antimicrobial peptide.